The chain runs to 104 residues: L-rhamnose mutarotase (104 aa).

A substrate-binding site is contributed by Y18. H22 acts as the Proton donor in catalysis. Residues Y41 and 76–77 (WW) contribute to the substrate site.

It belongs to the rhamnose mutarotase family. Homodimer.

The protein localises to the cytoplasm. It carries out the reaction alpha-L-rhamnose = beta-L-rhamnose. It participates in carbohydrate metabolism; L-rhamnose metabolism. Functionally, involved in the anomeric conversion of L-rhamnose. The chain is L-rhamnose mutarotase from Listeria monocytogenes serovar 1/2a (strain ATCC BAA-679 / EGD-e).